Here is a 454-residue protein sequence, read N- to C-terminus: MAEFSQKRGKRRGDEGLGSMVDFLLANARLVLGVGGAAVLGIATLAVKRFIDRATSPRDEDDTKADSWKELSLLKATPHLQPRPPPAALSQPVLPLAPSSSAPEGPAKSDPEVTPQLSSPAPLCLTLQERLLAFERDRVTIPAAQVALAKQLAGDIALELQAYFQSKFPELPFGAFVPGGPLYDGLQAGAADHVRLLVPLVLEPGLWSLVPGVDTVARDPRCWAVRRTQLEFCPRGSSPWDRFLVGGYLSSRVLLELLRKVLAASVNWPAIGSLLGCLIRPSMASEELLLEVQHERLELTVAVLVAVPGVDADDRLLLAWPLEGLAGNLWLQDLYPVEAARLRALDDRDAGTRRRLLLLLCAVCRGCSALGQLGRGHLTQVVLRLGEDNVDWTEEALGERFLQALELLIGSLEQASLPCHFNPSVNLFSNLREEEIDDIGYALYSGLQEPEGLL.

The Mitochondrial intermembrane segment spans residues 1 to 22 (MAEFSQKRGKRRGDEGLGSMVD). A helical transmembrane segment spans residues 23–43 (FLLANARLVLGVGGAAVLGIA). The Cytoplasmic segment spans residues 44–454 (TLAVKRFIDR…SGLQEPEGLL (411 aa)). A disordered region spans residues 76–119 (ATPHLQPRPPPAALSQPVLPLAPSSSAPEGPAKSDPEVTPQLSS). Positions 88 to 108 (ALSQPVLPLAPSSSAPEGPAK) are enriched in low complexity.

It belongs to the MID49/MID51 family. Interacts with DNM1L.

The protein localises to the mitochondrion outer membrane. Functionally, mitochondrial outer membrane protein which regulates mitochondrial organization. It is required for mitochondrial fission and promotes the recruitment and association of the fission mediator dynamin-related protein 1 (DNM1L) to the mitochondrial surface independently of the mitochondrial fission FIS1 and MFF proteins. Regulates DNM1L GTPase activity. This chain is Mitochondrial dynamics protein MID49 (MIEF2), found in Pongo abelii (Sumatran orangutan).